Consider the following 736-residue polypeptide: ABC transporter G family member 16 (736 aa).

The 245-residue stretch at 88–332 (LDFHDLVPWR…FAGFGNPIPE (245 aa)) folds into the ABC transporter domain. ATP is bound at residue 125–132 (GASGSGKS). 7 helical membrane-spanning segments follow: residues 410–430 (SVIN…PFWI), 449–469 (LLGM…TVFW), 484–504 (FFAF…PVFL), 525–545 (VLSH…AFAV), 569–589 (ASFW…PHVM), 590–610 (LGYT…GFFI), and 709–729 (LLIT…CLLL). The 211-residue stretch at 430 to 640 (IEIKTLTRRS…PYEAVLQNEF (211 aa)) folds into the ABC transmembrane type-2 domain.

The protein belongs to the ABC transporter superfamily. ABCG family. Eye pigment precursor importer (TC 3.A.1.204) subfamily.

Its subcellular location is the membrane. In Arabidopsis thaliana (Mouse-ear cress), this protein is ABC transporter G family member 16 (ABCG16).